Here is a 275-residue protein sequence, read N- to C-terminus: 3-methyl-2-oxobutanoate hydroxymethyltransferase (275 aa).

Mg(2+)-binding residues include aspartate 51 and aspartate 90. 3-methyl-2-oxobutanoate is bound by residues 51–52, aspartate 90, and lysine 120; that span reads DS. A Mg(2+)-binding site is contributed by glutamate 122. Glutamate 189 functions as the Proton acceptor in the catalytic mechanism.

Belongs to the PanB family. Homodecamer; pentamer of dimers. It depends on Mg(2+) as a cofactor.

The protein resides in the cytoplasm. It catalyses the reaction 3-methyl-2-oxobutanoate + (6R)-5,10-methylene-5,6,7,8-tetrahydrofolate + H2O = 2-dehydropantoate + (6S)-5,6,7,8-tetrahydrofolate. It functions in the pathway cofactor biosynthesis; (R)-pantothenate biosynthesis; (R)-pantoate from 3-methyl-2-oxobutanoate: step 1/2. Its function is as follows. Catalyzes the reversible reaction in which hydroxymethyl group from 5,10-methylenetetrahydrofolate is transferred onto alpha-ketoisovalerate to form ketopantoate. This is 3-methyl-2-oxobutanoate hydroxymethyltransferase from Phenylobacterium zucineum (strain HLK1).